The sequence spans 200 residues: Small ribosomal subunit protein uS4 (200 aa).

The interval 20-41 (SGTGKELEKRPYAPGQHGPNQR) is disordered. The 64-residue stretch at 92 to 155 (ARLDAVVYSL…LKLDIIAESV (64 aa)) folds into the S4 RNA-binding domain.

This sequence belongs to the universal ribosomal protein uS4 family. Part of the 30S ribosomal subunit. Contacts protein S5. The interaction surface between S4 and S5 is involved in control of translational fidelity.

In terms of biological role, one of the primary rRNA binding proteins, it binds directly to 16S rRNA where it nucleates assembly of the body of the 30S subunit. Functionally, with S5 and S12 plays an important role in translational accuracy. The polypeptide is Small ribosomal subunit protein uS4 (Staphylococcus saprophyticus subsp. saprophyticus (strain ATCC 15305 / DSM 20229 / NCIMB 8711 / NCTC 7292 / S-41)).